The chain runs to 492 residues: Putative heme-binding protein VNG_2021C (492 aa).

Residue His-177 coordinates heme. The interval 253-301 (AGERVPAPEGGADAHGEGERTHHHGDSDHHDGDDGEQHHHSTGDEADDG) is disordered. Basic and acidic residues predominate over residues 264-301 (ADAHGEGERTHHHGDSDHHDGDDGEQHHHSTGDEADDG). The ABM domain maps to 402–490 (GTMGMFYETK…VLADRPRHVF (89 aa)).

This sequence in the N-terminal section; belongs to the ChdC family.

The chain is Putative heme-binding protein VNG_2021C from Halobacterium salinarum (strain ATCC 700922 / JCM 11081 / NRC-1) (Halobacterium halobium).